A 163-amino-acid polypeptide reads, in one-letter code: Crossover junction endodeoxyribonuclease RuvC (163 aa).

Active-site residues include Asp9, Glu76, and Asp148. Mg(2+) contacts are provided by Asp9, Glu76, and Asp148.

Belongs to the RuvC family. In terms of assembly, homodimer which binds Holliday junction (HJ) DNA. The HJ becomes 2-fold symmetrical on binding to RuvC with unstacked arms; it has a different conformation from HJ DNA in complex with RuvA. In the full resolvosome a probable DNA-RuvA(4)-RuvB(12)-RuvC(2) complex forms which resolves the HJ. The cofactor is Mg(2+).

Its subcellular location is the cytoplasm. The catalysed reaction is Endonucleolytic cleavage at a junction such as a reciprocal single-stranded crossover between two homologous DNA duplexes (Holliday junction).. Functionally, the RuvA-RuvB-RuvC complex processes Holliday junction (HJ) DNA during genetic recombination and DNA repair. Endonuclease that resolves HJ intermediates. Cleaves cruciform DNA by making single-stranded nicks across the HJ at symmetrical positions within the homologous arms, yielding a 5'-phosphate and a 3'-hydroxyl group; requires a central core of homology in the junction. The consensus cleavage sequence is 5'-(A/T)TT(C/G)-3'. Cleavage occurs on the 3'-side of the TT dinucleotide at the point of strand exchange. HJ branch migration catalyzed by RuvA-RuvB allows RuvC to scan DNA until it finds its consensus sequence, where it cleaves and resolves the cruciform DNA. This Trichodesmium erythraeum (strain IMS101) protein is Crossover junction endodeoxyribonuclease RuvC.